Reading from the N-terminus, the 504-residue chain is ATP synthase subunit alpha, chloroplastic (504 aa).

Residue 170–177 (GDRQTGKT) coordinates ATP.

Belongs to the ATPase alpha/beta chains family. In terms of assembly, F-type ATPases have 2 components, CF(1) - the catalytic core - and CF(0) - the membrane proton channel. CF(1) has five subunits: alpha(3), beta(3), gamma(1), delta(1), epsilon(1). CF(0) has four main subunits: a, b, b' and c.

Its subcellular location is the plastid. It localises to the chloroplast thylakoid membrane. It carries out the reaction ATP + H2O + 4 H(+)(in) = ADP + phosphate + 5 H(+)(out). Produces ATP from ADP in the presence of a proton gradient across the membrane. The alpha chain is a regulatory subunit. This is ATP synthase subunit alpha, chloroplastic from Cyanidium caldarium (Red alga).